A 202-amino-acid chain; its full sequence is LexA repressor (202 aa).

Positions 28-48 (RAEIAQRLGFRSPNAAEEHLK) form a DNA-binding region, H-T-H motif. Catalysis depends on for autocatalytic cleavage activity residues serine 119 and lysine 156.

Belongs to the peptidase S24 family. Homodimer.

The enzyme catalyses Hydrolysis of Ala-|-Gly bond in repressor LexA.. Represses a number of genes involved in the response to DNA damage (SOS response), including recA and lexA. Binds to the 16 bp palindromic sequence 5'-CTGTATATATATACAG-3'. In the presence of single-stranded DNA, RecA interacts with LexA causing an autocatalytic cleavage which disrupts the DNA-binding part of LexA, leading to derepression of the SOS regulon and eventually DNA repair. The chain is LexA repressor from Escherichia coli (strain K12 / MC4100 / BW2952).